The primary structure comprises 274 residues: NH(3)-dependent NAD(+) synthetase (274 aa).

Residue 46–53 (GISGGQDS) participates in ATP binding. A Mg(2+)-binding site is contributed by Asp52. Arg140 is a binding site for deamido-NAD(+). Thr160 provides a ligand contact to ATP. Glu165 lines the Mg(2+) pocket. Lys173 and Asp180 together coordinate deamido-NAD(+). Residues Lys189 and Thr211 each contribute to the ATP site. Deamido-NAD(+) is bound at residue 260–261 (HK).

Belongs to the NAD synthetase family. As to quaternary structure, homodimer.

The enzyme catalyses deamido-NAD(+) + NH4(+) + ATP = AMP + diphosphate + NAD(+) + H(+). The protein operates within cofactor biosynthesis; NAD(+) biosynthesis; NAD(+) from deamido-NAD(+) (ammonia route): step 1/1. Its function is as follows. Catalyzes the ATP-dependent amidation of deamido-NAD to form NAD. Uses ammonia as a nitrogen source. The chain is NH(3)-dependent NAD(+) synthetase from Lactococcus lactis subsp. cremoris (strain MG1363).